The chain runs to 120 residues: Phosphoribosyl-ATP pyrophosphatase (120 aa).

Residues 97–120 (REGTSGLVEKASRPAKKDSGTADS) are disordered. Over residues 106 to 120 (KASRPAKKDSGTADS) the composition is skewed to basic and acidic residues.

Belongs to the PRA-PH family.

Its subcellular location is the cytoplasm. The enzyme catalyses 1-(5-phospho-beta-D-ribosyl)-ATP + H2O = 1-(5-phospho-beta-D-ribosyl)-5'-AMP + diphosphate + H(+). The protein operates within amino-acid biosynthesis; L-histidine biosynthesis; L-histidine from 5-phospho-alpha-D-ribose 1-diphosphate: step 2/9. The polypeptide is Phosphoribosyl-ATP pyrophosphatase (Rhodopirellula baltica (strain DSM 10527 / NCIMB 13988 / SH1)).